The sequence spans 360 residues: Alanine racemase (360 aa).

The active-site Proton acceptor; specific for D-alanine is the lysine 33. At lysine 33 the chain carries N6-(pyridoxal phosphate)lysine. Residue arginine 129 participates in substrate binding. The Proton acceptor; specific for L-alanine role is filled by tyrosine 253. Methionine 301 serves as a coordination point for substrate.

The protein belongs to the alanine racemase family. Pyridoxal 5'-phosphate serves as cofactor.

It carries out the reaction L-alanine = D-alanine. It functions in the pathway amino-acid biosynthesis; D-alanine biosynthesis; D-alanine from L-alanine: step 1/1. In terms of biological role, catalyzes the interconversion of L-alanine and D-alanine. May also act on other amino acids. The sequence is that of Alanine racemase (alr) from Xanthomonas campestris pv. campestris (strain 8004).